A 220-amino-acid chain; its full sequence is Putative O-methyltransferase Mmcs_3995 (220 aa).

S-adenosyl-L-methionine is bound by residues Val-47, Glu-69, 71–72 (GT), Ser-77, Asp-95, and Val-96. Asp-143 contributes to the substrate binding site. Residue Asp-145 participates in S-adenosyl-L-methionine binding.

Belongs to the class I-like SAM-binding methyltransferase superfamily. Cation-dependent O-methyltransferase family.

This is Putative O-methyltransferase Mmcs_3995 from Mycobacterium sp. (strain MCS).